We begin with the raw amino-acid sequence, 78 residues long: uncharacterized protein (78 aa).

A helical transmembrane segment spans residues 21 to 43 (SPFLFGAPLVGGLLGGFLGSALF).

Its subcellular location is the membrane. This is an uncharacterized protein from Bacillus subtilis (strain 168).